Here is a 578-residue protein sequence, read N- to C-terminus: CTP synthase (578 aa).

Residues 305–559 enclose the Glutamine amidotransferase type-1 domain; sequence KIALVGKYTN…LGLVAASSGI (255 aa). Residues C404, H535, and E537 each act as for GATase activity in the active site.

Belongs to the CTP synthase family.

It carries out the reaction UTP + L-glutamine + ATP + H2O = CTP + L-glutamate + ADP + phosphate + 2 H(+). It functions in the pathway pyrimidine metabolism; CTP biosynthesis via de novo pathway; CTP from UDP: step 2/2. Functionally, catalyzes the ATP-dependent amination of UTP to CTP with either L-glutamine or ammonia as the source of nitrogen. The polypeptide is CTP synthase (URA7) (Candida glabrata (strain ATCC 2001 / BCRC 20586 / JCM 3761 / NBRC 0622 / NRRL Y-65 / CBS 138) (Yeast)).